The chain runs to 185 residues: Elongation factor P (185 aa).

This sequence belongs to the elongation factor P family.

Its subcellular location is the cytoplasm. Its pathway is protein biosynthesis; polypeptide chain elongation. Involved in peptide bond synthesis. Stimulates efficient translation and peptide-bond synthesis on native or reconstituted 70S ribosomes in vitro. Probably functions indirectly by altering the affinity of the ribosome for aminoacyl-tRNA, thus increasing their reactivity as acceptors for peptidyl transferase. This chain is Elongation factor P, found in Lysinibacillus sphaericus (strain C3-41).